The chain runs to 2321 residues: MGPGARGRRRRRRPMSPPPPPPPVRALPLLLLLAGPGAAAPPCLDGSPCANGGRCTQLPSREAACLCPPGWVGERCQLEDPCHSGPCAGRGVCQSSVVAGTARFSCRCPRGFRGPDCSLPDPCLSSPCAHGARCSVGPDGRFLCSCPPGYQGRSCRSDVDECRVGEPCRHGGTCLNTPGSFRCQCPAGYTGPLCENPAVPCAPSPCRNGGTCRQSGDLTYDCACLPGFEGQNCEVNVDDCPGHRCLNGGTCVDGVNTYNCQCPPEWTGQFCTEDVDECQLQPNACHNGGTCFNTLGGHSCVCVNGWTGESCSQNIDDCATAVCFHGATCHDRVASFYCACPMGKTGLLCHLDDACVSNPCHEDAICDTNPVNGRAICTCPPGFTGGACDQDVDECSIGANPCEHLGRCVNTQGSFLCQCGRGYTGPRCETDVNECLSGPCRNQATCLDRIGQFTCICMAGFTGTYCEVDIDECQSSPCVNGGVCKDRVNGFSCTCPSGFSGSTCQLDVDECASTPCRNGAKCVDQPDGYECRCAEGFEGTLCDRNVDDCSPDPCHHGRCVDGIASFSCACAPGYTGTRCESQVDECRSQPCRHGGKCLDLVDKYLCRCPSGTTGVNCEVNIDDCASNPCTFGVCRDGINRYDCVCQPGFTGPLCNVEINECASSPCGEGGSCVDGENGFRCLCPPGSLPPLCLPPSHPCAHEPCSHGICYDAPGGFRCVCEPGWSGPRCSQSLARDACESQPCRAGGTCSSDGMGFHCTCPPGVQGRQCELLSPCTPNPCEHGGRCESAPGQLPVCSCPQGWQGPRCQQDVDECAGPAPCGPHGICTNLAGSFSCTCHGGYTGPSCDQDINDCDPNPCLNGGSCQDGVGSFSCSCLPGFAGPRCARDVDECLSNPCGPGTCTDHVASFTCTCPPGYGGFHCEQDLPDCSPSSCFNGGTCVDGVNSFSCLCRPGYTGAHCQHEADPCLSRPCLHGGVCSAAHPGFRCTCLESFTGPQCQTLVDWCSRQPCQNGGRCVQTGAYCLCPPGWSGRLCDIRSLPCREAAAQIGVRLEQLCQAGGQCVDEDSSHYCVCPEGRTGSHCEQEVDPCLAQPCQHGGTCRGYMGGYMCECLPGYNGDNCEDDVDECASQPCQHGGSCIDLVARYLCSCPPGTLGVLCEINEDDCGPGPPLDSGPRCLHNGTCVDLVGGFRCTCPPGYTGLRCEADINECRSGACHAAHTRDCLQDPGGGFRCLCHAGFSGPRCQTVLSPCESQPCQHGGQCRPSPGPGGGLTFTCHCAQPFWGPRCERVARSCRELQCPVGVPCQQTPRGPRCACPPGLSGPSCRSFPGSPPGASNASCAAAPCLHGGSCRPAPLAPFFRCACAQGWTGPRCEAPAAAPEVSEEPRCPRAACQAKRGDQRCDRECNSPGCGWDGGDCSLSVGDPWRQCEALQCWRLFNNSRCDPACSSPACLYDNFDCHAGGRERTCNPVYEKYCADHFADGRCDQGCNTEECGWDGLDCASEVPALLARGVLVLTVLLPPEELLRSSADFLQRLSAILRTSLRFRLDAHGQAMVFPYHRPSPGSEPRARRELAPEVIGSVVMLEIDNRLCLQSPENDHCFPDAQSAADYLGALSAVERLDFPYPLRDVRGEPLEPPEPSVPLLPLLVAGAVLLLVILVLGVMVARRKREHSTLWFPEGFSLHKDVASGHKGRREPVGQDALGMKNMAKGESLMGEVATDWMDTECPEAKRLKVEEPGMGAEEAVDCRQWTQHHLVAADIRVAPAMALTPPQGDADADGMDVNVRGPDGFTPLMLASFCGGALEPMPTEEDEADDTSASIISDLICQGAQLGARTDRTGETALHLAARYARADAAKRLLDAGADTNAQDHSGRTPLHTAVTADAQGVFQILIRNRSTDLDARMADGSTALILAARLAVEGMVEELIASHADVNAVDELGKSALHWAAAVNNVEATLALLKNGANKDMQDSKEETPLFLAAREGSYEAAKLLLDHFANREITDHLDRLPRDVAQERLHQDIVRLLDQPSGPRSPPGPHGLGPLLCPPGAFLPGLKAAQSGSKKSRRPPGKAGLGPQGPRGRGKKLTLACPGPLADSSVTLSPVDSLDSPRPFGGPPASPGGFPLEGPYAAATATAVSLAQLGGPGRAGLGRQPPGGCVLSLGLLNPVAVPLDWARLPPPAPPGPSFLLPLAPGPQLLNPGTPVSPQERPPPYLAVPGHGEEYPAAGAHSSPPKARFLRVPSEHPYLTPSPESPEHWASPSPPSLSDWSESTPSPATATGAMATTTGALPAQPLPLSVPSSLAQAQTQLGPQPEVTPKRQVLA.

Residues 1–14 (MGPGARGRRRRRRP) are compositionally biased toward basic residues. The disordered stretch occupies residues 1–26 (MGPGARGRRRRRRPMSPPPPPPPVRA). A signal peptide spans 1-39 (MGPGARGRRRRRRPMSPPPPPPPVRALPLLLLLAGPGAA). A compositionally biased stretch (pro residues) spans 15–25 (MSPPPPPPPVR). 3 consecutive EGF-like domains span residues 40 to 77 (APPC…ERCQ), 78 to 118 (LEDP…PDCS), and 119 to 156 (LPDP…RSCR). The Extracellular portion of the chain corresponds to 40–1643 (APPCLDGSPC…LEPPEPSVPL (1604 aa)). 99 disulfide bridges follow: C43–C55, C49–C65, C67–C76, C82–C93, C87–C106, C108–C117, C123–C134, C128–C144, C146–C155, C162–C174, C168–C183, C185–C194, C201–C212, C206–C222, C224–C233, C240–C251, C245–C260, C262–C271, C278–C291, C285–C300, C302–C311, C318–C329, C323–C338, C340–C349, C355–C366, C360–C377, C379–C388, C395–C408, C402–C417, C419–C428, C435–C446, C440–C455, C457–C466, C473–C484, C478–C493, C495–C504, C511–C522, C516–C531, C533–C542, C549–C559, C554–C568, C570–C579, C586–C597, C591–C606, C608–C617, C624–C634, C629–C643, C645–C654, C661–C672, C666–C681, C683–C692, C699–C709, C704–C718, C720–C729, C738–C749, C743–C758, C760–C769, C775–C786, C780–C796, C798–C807, C814–C826, C820–C835, C837–C846, C853–C864, C858–C873, C875–C884, C891–C901, C896–C910, C912–C921, C928–C939, C933–C948, C950–C959, C966–C977, C971–C986, C988–C997, C1004–C1015, C1009–C1022, C1024–C1033, C1040–C1061, C1055–C1070, C1072–C1081, C1088–C1099, C1093–C1108, C1110–C1119, C1126–C1137, C1131–C1146, C1148–C1157, C1164–C1182, C1176–C1191, C1193–C1202, C1209–C1222, C1214–C1232, C1234–C1243, C1250–C1261, C1255–C1275, C1277–C1286, C1293–C1304, C1298–C1313, and C1315–C1324. The EGF-like 4; calcium-binding domain occupies 158–195 (DVDECRVGEPCRHGGTCLNTPGSFRCQCPAGYTGPLCE). The 38-residue stretch at 197-234 (PAVPCAPSPCRNGGTCRQSGDLTYDCACLPGFEGQNCE) folds into the EGF-like 5 domain. The 37-residue stretch at 236-272 (NVDDCPGHRCLNGGTCVDGVNTYNCQCPPEWTGQFCT) folds into the EGF-like 6; calcium-binding domain. In terms of domain architecture, EGF-like 7 spans 274 to 312 (DVDECQLQPNACHNGGTCFNTLGGHSCVCVNGWTGESCS). Residues 314 to 350 (NIDDCATAVCFHGATCHDRVASFYCACPMGKTGLLCH) enclose the EGF-like 8; calcium-binding domain. One can recognise an EGF-like 9 domain in the interval 351–389 (LDDACVSNPCHEDAICDTNPVNGRAICTCPPGFTGGACD). The 39-residue stretch at 391 to 429 (DVDECSIGANPCEHLGRCVNTQGSFLCQCGRGYTGPRCE) folds into the EGF-like 10; calcium-binding domain. An EGF-like 11; calcium-binding domain is found at 431 to 467 (DVNECLSGPCRNQATCLDRIGQFTCICMAGFTGTYCE). In terms of domain architecture, EGF-like 12; calcium-binding spans 469–505 (DIDECQSSPCVNGGVCKDRVNGFSCTCPSGFSGSTCQ). In terms of domain architecture, EGF-like 13; calcium-binding spans 507 to 543 (DVDECASTPCRNGAKCVDQPDGYECRCAEGFEGTLCD). An EGF-like 14; calcium-binding domain is found at 545 to 580 (NVDDCSPDPCHHGRCVDGIASFSCACAPGYTGTRCE). The EGF-like 15; calcium-binding domain maps to 582–618 (QVDECRSQPCRHGGKCLDLVDKYLCRCPSGTTGVNCE). The EGF-like 16; calcium-binding domain occupies 620–655 (NIDDCASNPCTFGVCRDGINRYDCVCQPGFTGPLCN). One can recognise an EGF-like 17; calcium-binding domain in the interval 657–693 (EINECASSPCGEGGSCVDGENGFRCLCPPGSLPPLCL). 3 consecutive EGF-like domains span residues 695-730 (PSHP…PRCS), 734-770 (ARDA…RQCE), and 771-808 (LLSP…PRCQ). The EGF-like 21; calcium-binding domain occupies 810 to 847 (DVDECAGPAPCGPHGICTNLAGSFSCTCHGGYTGPSCD). An EGF-like 22; calcium-binding domain is found at 849-885 (DINDCDPNPCLNGGSCQDGVGSFSCSCLPGFAGPRCA). An EGF-like 23; calcium-binding domain is found at 887–922 (DVDECLSNPCGPGTCTDHVASFTCTCPPGYGGFHCE). 5 EGF-like domains span residues 924-960 (DLPD…AHCQ), 962-998 (EADP…PQCQ), 1000-1034 (LVDW…RLCD), 1036-1082 (RSLP…SHCE), and 1084-1120 (EVDP…DNCE). Positions 1122 to 1158 (DVDECASQPCQHGGSCIDLVARYLCSCPPGTLGVLCE) constitute an EGF-like 29; calcium-binding domain. The 44-residue stretch at 1160 to 1203 (NEDDCGPGPPLDSGPRCLHNGTCVDLVGGFRCTCPPGYTGLRCE) folds into the EGF-like 30; calcium-binding domain. The N-linked (GlcNAc...) asparagine glycan is linked to N1179. 4 consecutive EGF-like domains span residues 1205–1244 (DINE…PRCQ), 1246–1287 (VLSP…PRCE), 1289–1325 (VARS…PSCR), and 1335–1373 (SNAS…PRCE). N-linked (GlcNAc...) asparagine glycosylation occurs at N1336. 12 disulfide bridges follow: C1339–C1350, C1344–C1361, C1363–C1372, C1387–C1410, C1392–C1405, C1401–C1417, C1428–C1451, C1433–C1446, C1442–C1458, C1467–C1493, C1475–C1488, and C1484–C1500. 3 LNR repeats span residues 1387–1427 (CPRA…PWRQ), 1428–1458 (CEAL…NFDC), and 1467–1505 (CNPV…SEVP). Residue N1438 is glycosylated (N-linked (GlcNAc...) asparagine). Residues 1644 to 1664 (LPLLVAGAVLLLVILVLGVMV) traverse the membrane as a helical segment. At 1665 to 2321 (ARRKREHSTL…EVTPKRQVLA (657 aa)) the chain is on the cytoplasmic side. 5 ANK repeats span residues 1838-1867 (TGET…DTNA), 1871-1901 (SGRT…DLDA), 1905-1934 (DGST…DVNA), 1938-1967 (LGKS…NKDM), and 1971-2000 (KEET…NREI). A disordered region spans residues 2024-2120 (LDQPSGPRSP…FGGPPASPGG (97 aa)). Positions 2039 to 2053 (LGPLLCPPGAFLPGL) are enriched in low complexity. R2174 is subject to Omega-N-methylarginine. Positions 2190–2321 (APGPQLLNPG…EVTPKRQVLA (132 aa)) are disordered. The span at 2269-2289 (STPSPATATGAMATTTGALPA) shows a compositional bias: low complexity. Over residues 2296-2308 (VPSSLAQAQTQLG) the composition is skewed to polar residues.

This sequence belongs to the NOTCH family. As to quaternary structure, heterodimer of a C-terminal fragment N(TM) and a N-terminal fragment N(EC) which are probably linked by disulfide bonds. Interacts with MAML1, MAML2 and MAML3 which act as transcriptional coactivators for NOTCH3. Interacts with PSMA1. Interacts with HIF1AN. In terms of processing, synthesized in the endoplasmic reticulum as an inactive form which is proteolytically cleaved by a furin-like convertase in the trans-Golgi network before it reaches the plasma membrane to yield an active, ligand-accessible form. Cleavage results in a C-terminal fragment N(TM) and a N-terminal fragment N(EC). Following ligand binding, it is cleaved by TNF-alpha converting enzyme (TACE) to yield a membrane-associated intermediate fragment called notch extracellular truncation (NEXT). This fragment is then cleaved by presenilin dependent gamma-secretase to release a notch-derived peptide containing the intracellular domain (NICD) from the membrane. Post-translationally, phosphorylated. Hydroxylated by HIF1AN. Ubiquitously expressed in fetal and adult tissues.

It localises to the cell membrane. The protein resides in the nucleus. Its function is as follows. Functions as a receptor for membrane-bound ligands Jagged1, Jagged2 and Delta1 to regulate cell-fate determination. Upon ligand activation through the released notch intracellular domain (NICD) it forms a transcriptional activator complex with RBPJ/RBPSUH and activates genes of the enhancer of split locus. Affects the implementation of differentiation, proliferation and apoptotic programs. The protein is Neurogenic locus notch homolog protein 3 (NOTCH3) of Homo sapiens (Human).